A 342-amino-acid polypeptide reads, in one-letter code: Ferredoxin--NADP reductase (342 aa).

8 residues coordinate FAD: cysteine 17, aspartate 36, glutamine 44, tyrosine 49, valine 89, phenylalanine 124, aspartate 289, and threonine 330.

It belongs to the ferredoxin--NADP reductase type 2 family. Homodimer. The cofactor is FAD.

It catalyses the reaction 2 reduced [2Fe-2S]-[ferredoxin] + NADP(+) + H(+) = 2 oxidized [2Fe-2S]-[ferredoxin] + NADPH. This chain is Ferredoxin--NADP reductase, found in Bradyrhizobium sp. (strain BTAi1 / ATCC BAA-1182).